The primary structure comprises 423 residues: Serine hydroxymethyltransferase (423 aa).

(6S)-5,6,7,8-tetrahydrofolate is bound by residues L126 and 130–132 (GHL). K235 is subject to N6-(pyridoxal phosphate)lysine.

This sequence belongs to the SHMT family. Homodimer. Pyridoxal 5'-phosphate is required as a cofactor.

It is found in the cytoplasm. It carries out the reaction (6R)-5,10-methylene-5,6,7,8-tetrahydrofolate + glycine + H2O = (6S)-5,6,7,8-tetrahydrofolate + L-serine. It functions in the pathway one-carbon metabolism; tetrahydrofolate interconversion. It participates in amino-acid biosynthesis; glycine biosynthesis; glycine from L-serine: step 1/1. Functionally, catalyzes the reversible interconversion of serine and glycine with tetrahydrofolate (THF) serving as the one-carbon carrier. This reaction serves as the major source of one-carbon groups required for the biosynthesis of purines, thymidylate, methionine, and other important biomolecules. Also exhibits THF-independent aldolase activity toward beta-hydroxyamino acids, producing glycine and aldehydes, via a retro-aldol mechanism. In Sorangium cellulosum (strain So ce56) (Polyangium cellulosum (strain So ce56)), this protein is Serine hydroxymethyltransferase.